The sequence spans 72 residues: Cell division protein ZapB (72 aa).

A coiled-coil region spans residues 1 to 72 (MSLEILDQLE…RSLLGKIDNV (72 aa)). Residues 33-57 (KNNQSQQANDALRSENEQLKSEHQN) form a disordered region. Residues 44–57 (LRSENEQLKSEHQN) show a composition bias toward basic and acidic residues.

The protein belongs to the ZapB family. As to quaternary structure, homodimer. The ends of the coiled-coil dimer bind to each other, forming polymers. Interacts with FtsZ.

It is found in the cytoplasm. Its function is as follows. Non-essential, abundant cell division factor that is required for proper Z-ring formation. It is recruited early to the divisome by direct interaction with FtsZ, stimulating Z-ring assembly and thereby promoting cell division earlier in the cell cycle. Its recruitment to the Z-ring requires functional FtsA or ZipA. The polypeptide is Cell division protein ZapB (Pasteurella multocida (strain Pm70)).